The sequence spans 847 residues: Alanine--tRNA ligase (847 aa).

Residues His-554, His-558, Cys-656, and His-660 each contribute to the Zn(2+) site.

The protein belongs to the class-II aminoacyl-tRNA synthetase family. Zn(2+) serves as cofactor.

It is found in the cytoplasm. The catalysed reaction is tRNA(Ala) + L-alanine + ATP = L-alanyl-tRNA(Ala) + AMP + diphosphate. Catalyzes the attachment of alanine to tRNA(Ala) in a two-step reaction: alanine is first activated by ATP to form Ala-AMP and then transferred to the acceptor end of tRNA(Ala). Also edits incorrectly charged Ser-tRNA(Ala) and Gly-tRNA(Ala) via its editing domain. The protein is Alanine--tRNA ligase of Helicobacter acinonychis (strain Sheeba).